We begin with the raw amino-acid sequence, 175 residues long: UPF0398 protein SGO_0588 (175 aa).

The protein belongs to the UPF0398 family.

The chain is UPF0398 protein SGO_0588 from Streptococcus gordonii (strain Challis / ATCC 35105 / BCRC 15272 / CH1 / DL1 / V288).